An 808-amino-acid polypeptide reads, in one-letter code: Sucrose synthase 2 (808 aa).

Ser-10 carries the phosphoserine; by CPK modification. A GT-B glycosyltransferase region spans residues 272-749; it reads MMFNVVILSP…GLQRIYEKYT (478 aa).

It belongs to the glycosyltransferase 1 family. Plant sucrose synthase subfamily. In terms of assembly, homotetramer or heterotetramer with SUS1. Post-translationally, phosphorylated at Ser-10 by CPK23 in developing seeds. Predominantly expressed in the leaf tissues. Expressed in seeds, and at lower levels in roots. Expressed in leaf mesophyll and phloem (at protein level).

The catalysed reaction is an NDP-alpha-D-glucose + D-fructose = a ribonucleoside 5'-diphosphate + sucrose + H(+). Its activity is regulated as follows. Activated by phosphorylation at Ser-10 by CPK23. In terms of biological role, sucrose-cleaving enzyme that provides UDP-glucose and fructose for various metabolic pathways. Functions in developing seeds by supplying substrates for the biosynthesis of storage products. This Oryza sativa subsp. japonica (Rice) protein is Sucrose synthase 2 (SUS2).